Consider the following 221-residue polypeptide: Type II secretion system protein J (221 aa).

Residues 1–15 (MWRTNQVSSRQNMAG) constitute a propeptide, leader sequence. Phe-16 is subject to N-methylphenylalanine. Residues 16–36 (FTLIEVLVAIAIFASLSVGAY) traverse the membrane as a helical segment.

This sequence belongs to the GSP J family. As to quaternary structure, type II secretion is composed of four main components: the outer membrane complex, the inner membrane complex, the cytoplasmic secretion ATPase and the periplasm-spanning pseudopilus. Interacts with core component epsG. Cleaved by prepilin peptidase. In terms of processing, methylated by prepilin peptidase at the amino group of the N-terminal phenylalanine once the leader sequence is cleaved by prepilin peptidase.

It is found in the cell inner membrane. Component of the type II secretion system required for the energy-dependent secretion of extracellular factors such as proteases and toxins from the periplasm. Part of the pseudopilus tip complex that is critical for the recognition and binding of secretion substrates. This chain is Type II secretion system protein J (epsJ), found in Vibrio cholerae serotype O1 (strain ATCC 39315 / El Tor Inaba N16961).